Here is a 509-residue protein sequence, read N- to C-terminus: tRNA-2-methylthio-N(6)-dimethylallyladenosine synthase (509 aa).

Residues 1–15 (MNEQQRLASQQVNSS) show a composition bias toward polar residues. Positions 1-26 (MNEQQRLASQQVNSSTKKEEKDYSKY) are disordered. Residues 16-25 (TKKEEKDYSK) show a composition bias toward basic and acidic residues. Positions 66–184 (RKFYIRTYGC…LPYILKDAMF (119 aa)) constitute an MTTase N-terminal domain. Residues Cys75, Cys111, Cys145, Cys221, Cys225, and Cys228 each contribute to the [4Fe-4S] cluster site. A Radical SAM core domain is found at 207 to 437 (RRGDIKAWVN…NALVNKLAIE (231 aa)). Residues 440 to 503 (NRYKGQIVEV…TWSLNGELVE (64 aa)) form the TRAM domain.

Belongs to the methylthiotransferase family. MiaB subfamily. Monomer. [4Fe-4S] cluster serves as cofactor.

It is found in the cytoplasm. It catalyses the reaction N(6)-dimethylallyladenosine(37) in tRNA + (sulfur carrier)-SH + AH2 + 2 S-adenosyl-L-methionine = 2-methylsulfanyl-N(6)-dimethylallyladenosine(37) in tRNA + (sulfur carrier)-H + 5'-deoxyadenosine + L-methionine + A + S-adenosyl-L-homocysteine + 2 H(+). In terms of biological role, catalyzes the methylthiolation of N6-(dimethylallyl)adenosine (i(6)A), leading to the formation of 2-methylthio-N6-(dimethylallyl)adenosine (ms(2)i(6)A) at position 37 in tRNAs that read codons beginning with uridine. The polypeptide is tRNA-2-methylthio-N(6)-dimethylallyladenosine synthase (Bacillus cereus (strain AH187)).